The chain runs to 491 residues: Putative mannan endo-1,4-beta-mannosidase 5 (491 aa).

Residues 1-31 (METSYREEEARRKASLLHCIFFFLLGALAMA) form the signal peptide. Substrate-binding residues include Trp-134 and Asn-248. The active-site Proton donor is Glu-249. Substrate is bound at residue Tyr-330. Glu-372 functions as the Nucleophile in the catalytic mechanism. Asn-385 carries N-linked (GlcNAc...) asparagine glycosylation. Position 416 (Trp-416) interacts with substrate. Asn-471 carries an N-linked (GlcNAc...) asparagine glycan.

This sequence belongs to the glycosyl hydrolase 5 (cellulase A) family. Expression not detected.

It is found in the secreted. It catalyses the reaction Random hydrolysis of (1-&gt;4)-beta-D-mannosidic linkages in mannans, galactomannans and glucomannans.. This Oryza sativa subsp. japonica (Rice) protein is Putative mannan endo-1,4-beta-mannosidase 5 (MAN5).